Reading from the N-terminus, the 206-residue chain is Sclerostin domain-containing protein 1 (206 aa).

Residues 1–23 (MLPPAIHFYLLPLACILMKSCLA) form the signal peptide. The N-linked (GlcNAc...) asparagine glycan is linked to asparagine 47. Disulfide bonds link cysteine 75-cysteine 133, cysteine 89-cysteine 147, cysteine 100-cysteine 163, and cysteine 104-cysteine 165. Residues 75–170 (CRELRSTKYI…TACKCKRYTR (96 aa)) form the CTCK domain. Residue asparagine 173 is glycosylated (N-linked (GlcNAc...) asparagine). The interval 176-206 (SHNFESMSPAKPVQHHRERKRASKSSKHSMS) is disordered. Over residues 188-206 (VQHHRERKRASKSSKHSMS) the composition is skewed to basic residues.

It belongs to the sclerostin family. Interacts with BMP2, BMP4, BMP6 and BMP7 with high affinity.

It localises to the secreted. Directly antagonizes activity of BMP2, BMP4, BMP6 and BMP7 in a dose-dependent manner. Enhances Wnt signaling and inhibits TGF-beta signaling. May be involved in the onset of endometrial receptivity for implantation/sensitization for the decidual cell reaction. This Pongo abelii (Sumatran orangutan) protein is Sclerostin domain-containing protein 1 (SOSTDC1).